Here is a 404-residue protein sequence, read N- to C-terminus: S-adenosylmethionine synthase (404 aa).

Position 139 to 144 (139 to 144 (GKGSTD)) interacts with ATP.

The protein belongs to the AdoMet synthase 2 family. The cofactor is Mg(2+).

The enzyme catalyses L-methionine + ATP + H2O = S-adenosyl-L-methionine + phosphate + diphosphate. The protein operates within amino-acid biosynthesis; S-adenosyl-L-methionine biosynthesis; S-adenosyl-L-methionine from L-methionine: step 1/1. Its function is as follows. Catalyzes the formation of S-adenosylmethionine from methionine and ATP. The chain is S-adenosylmethionine synthase from Saccharolobus islandicus (strain Y.N.15.51 / Yellowstone #2) (Sulfolobus islandicus).